A 2034-amino-acid polypeptide reads, in one-letter code: MASAVSPANLPAVLLQPRWKRVVGWSGPVPRPRHGHRAVAIKELIVVFGGGNEGIVDELHVYNTATNQWFIPAVRGDIPPGCAAYGFVCDGTRLLVFGGMVEYGKYSNDLYELQASRWEWKRLKAKTPKNGPPPCPRLGHSFSLVGNKCYLFGGLANDSEDPKNNIPRYLNDLYILELRPGSGVVAWDIPITYGVLPPPRESHTAVVYTEKDNKKSKLVIYGGMSGCRLGDLWTLDIETLTWNKPSLSGVAPLPRSLHSATTIGNKMYVFGGWVPLVMDDVKVATHEKEWKCTNTLACLNLDTMAWETILMDTLEDNIPRARAGHCAVAINTRLYIWSGRDGYRKAWNNQVCCKDLWYLETEKPPPPARVQLVRANTNSLEVSWGAVATADSYLLQLQKYDIPATAATATSPTPNPVPSVPANPPKSPAPAAAAPAVQPLTQVGITLVPQAAAAPPSTTTIQVLPTVPGSSISVPTAARTQGVPAVLKVTGPQATTGTPLVTMRPASQAGKAPVTVTSLPASVRMVVPTQSAQGTVIGSNPQMSGMAALAAAAAATQKIPPSSAPTVLSVPAGTTIVKTVAVTPGTTTLPATVKVASSPVMVSNPATRMLKTAAAQVGTSVSSAANTSTRPIITVHKSGTVTVAQQAQVVTTVVGGVTKTITLVKSPISVPGGSALISNLGKVMSVVQTKPVQTSAVTGQASTGPVTQIIQTKGPLPAGTILKLVTSADGKPTTIITTTQASGAGTKPTILGISSVSPSTTKPGTTTIIKTIPMSAIITQAGATGVTSSPGIKSPITIITTKVMTSGTGAPAKIITAVPKIATGHGQQGVTQVVLKGAPGQPGTILRTVPMGGVRLVTPVTVSAVKPAVTTLVVKGTTGVTTLGTVTGTVSTSLAGAGAHSTSASLATPITTLGTIATLSSQVINPTAITVSAAQTTLTAAGGLTTPTITMQPVSQPTQVTLITAPSGVEAQPVHDLPVSILASPTTEQPTATVTIADSGQGDVQPGTVTLVCSNPPCETHETGTTNTATTTVVANLGGHPQPTQVQFVCDRQEAAASLVTSAVGQQNGNVVRVCSNPPCETHETGTTNTATTATSNMAGQHGCSNPPCETHETGTTSTATTAMSSMGTGQQRDARRATNTPTVVRITVAPGALERAQGTVKPPCQTQQTNMTSTTMTVQATGAPCSAGPLLRPSVALETGSHSPAFVQLALPSVRVGLSGPSSKDVPTGRQPETYHTYTTNTPTTARSIMVAGELGTARVVPTSQYDCLQASSPSSTMTMTALEALLCPSATVTQVCSNPPCETHETGTTNTATTSNAGSAQRVCSNPPCETHETGTTHTATTATSNGGAGQPEGGQQPASGHPCETHQTTSTGTTMSVSVGALIPDATPSHGTLESGLEVVAVPTVTSQAGATLLASFSTQRVCSNPPCETHETGTTHTATTVTSNMSSNQDPPPAASDQGEVASTQGDSTNITSASAITTTVSSTLPRAVTTVTQSTPVPGPSVPPPEELQVSPGPRQQLPPRQLLQSASTPLMGESAEVLSASQTPELQAAVDLSSTGDPSSVQEPTTSAVVATVVVQPPQPTQSEVDQLSLPQELMAEAQAGTTTLMVTGLTPEELAVTAAAEAAAQAAATEEAQALAIQAVLQAAQQAVMGTGEPMDTSEAAAAVTQAELGHLSAEGQEGQATTIPIVLTQQELAALVQQQQQLQEAQAQAQQQHHLPTEALAPADSLNDPSIESNCLNELASAVPSTVALLPSTATESLAPSNTFVAPQPVVVASPAKMQAAATLTEVANGIESLGVKPDLPPPPSKAPIKKENQWFDVGVIKGTSVMVTHYFLPPDDAVQSDDDSGTVPDYNQLKKQELQPGTAYKFRVAGINACGRGPFSEISAFKTCLPGFPGAPCAIKISKSPDGAHLTWEPPSVTSGKIIEYSVYLAIQSSQASGEPKSSTPAQLAFMRVYCGPSPSCLVQSSSLSNAHIDYTTKPAIIFRIAARNEKGYGPATQVRWLQETSKDSSGTKPASKRPMSSPEM.

Ala2 carries the N-acetylalanine modification. Ser6 is modified (phosphoserine). Kelch repeat units follow at residues 44-89, 93-140, 148-194, 217-265, and 266-313; these read LIVV…GFVC, RLLV…RLGH, KCYL…ITYG, KLVI…TIGN, and KMYV…LMDT. Residues Lys105, Lys163, and Lys244 each participate in a glycyl lysine isopeptide (Lys-Gly) (interchain with G-Cter in ubiquitin) cross-link. Lys282 participates in a covalent cross-link: Glycyl lysine isopeptide (Lys-Gly) (interchain with G-Cter in SUMO2). Lys288 carries the N6-acetyllysine modification. Lys363 participates in a covalent cross-link: Glycyl lysine isopeptide (Lys-Gly) (interchain with G-Cter in ubiquitin). In terms of domain architecture, Fibronectin type-III 1 spans 366 to 469; that stretch reads PPARVQLVRA…TIQVLPTVPG (104 aa). The tract at residues 407-434 is disordered; it reads ATATSPTPNPVPSVPANPPKSPAPAAAA. A Phosphoserine modification is found at Ser411. Over residues 413–428 the composition is skewed to pro residues; the sequence is TPNPVPSVPANPPKSP. Positions 500 to 550 are required for interaction with OGT; the sequence is LVTMRPASQAGKAPVTVTSLPASVRMVVPTQSAQGTVIGSNPQMSGMAALA. Arg504 and Arg524 each carry omega-N-methylarginine. A phosphoserine mark is found at Ser598, Ser666, and Ser669. An interaction with SIN3A region spans residues 610 to 722; that stretch reads LKTAAAQVGT…KGPLPAGTIL (113 aa). Residues 750–902 are interaction with ZBTB17; it reads ILGISSVSPS…SLAGAGAHST (153 aa). An N6-acetyllysine modification is found at Lys813. The tract at residues 813–912 is interaction with GABP2; that stretch reads KIITAVPKIA…SASLATPITT (100 aa). HCF repeat repeat units follow at residues 1010-1035, 1072-1097, and 1101-1126; these read TLVC…TVVA, VRVC…ATSN, and QHGC…AMSS. The HCF repeat 4; degenerate repeat unit spans residues 1156 to 1182; that stretch reads RAQGTVKPPCQTQQTNMTSTTMTVQAT. Phosphoserine occurs at positions 1204 and 1223. Disordered regions lie at residues 1221–1241, 1302–1374, 1444–1477, and 1491–1525; these read GPSS…TYTT, PCET…TTST, TVTS…NITS, and RAVT…QLPP. HCF repeat repeat units follow at residues 1295 to 1320 and 1323 to 1348; these read TQVC…SNAG and QRVC…ATSN. Residues 1308–1321 show a composition bias toward low complexity; it reads TGTTNTATTSNAGS. The stretch at 1358-1383 is one HCF repeat 7; degenerate repeat; it reads QQPASGHPCETHQTTSTGTTMSVSVG. An HCF repeat 8 repeat occupies 1423–1448; the sequence is QRVCSNPPCETHETGTTHTATTVTSN. Positions 1491-1501 are enriched in low complexity; the sequence is RAVTTVTQSTP. Phosphothreonine is present on Thr1500. The segment covering 1502-1511 has biased composition (pro residues); it reads VPGPSVPPPE. Residues Ser1506 and Ser1516 each carry the phosphoserine modification. Residues 1693–1723 are a coiled coil; that stretch reads IVLTQQELAALVQQQQQLQEAQAQAQQQHHL. Ser1782 carries the phosphoserine modification. Fibronectin type-III domains lie at 1808-1899 and 1901-2017; these read LPPP…TCLP and FPGA…TSKD. Residues Lys1818 and Lys1819 each participate in a glycyl lysine isopeptide (Lys-Gly) (interchain with G-Cter in ubiquitin) cross-link. Phosphoserine is present on Ser1849. Positions 2005 to 2034 are disordered; the sequence is ATQVRWLQETSKDSSGTKPASKRPMSSPEM. At Lys2016 the chain carries N6-acetyllysine.

In terms of assembly, composed predominantly of six polypeptides ranging from 110 to 150 kDa and a minor 300 kDa polypeptide. The majority of N- and C-terminal cleavage products remain tightly, albeit non-covalently, associated. Interacts with POU2F1, CREB3, ZBTB17, EGR2, E2F4, CREBZF, SP1, GABP2, Sin3 HDAC complex (SIN3A, HDAC1, HDAC2, SUDS3), SAP30, SIN3B and FHL2. Component of a MLL1 complex, composed of at least the core components KMT2A/MLL1, ASH2L, HCFC1, WDR5 and RBBP5, as well as the facultative components BACC1, CHD8, DPY30, E2F6, HCFC2, HSP70, INO80C, KANSL1, LAS1L, MAX, MCRS1, MEN1, MGA, KAT8, PELP1, PHF20, PRP31, RING2, RUVBL1, RUVBL2, SENP3, TAF1, TAF4, TAF6, TAF7, TAF9 and TEX10. Component of a THAP1/THAP3-HCFC1-OGT complex that is required for the regulation of the transcriptional activity of RRM1. Interacts directly with THAP3 (via its HBM). Interacts (via the Kelch-repeat domain) with THAP1 (via the HBM); the interaction recruits HCHC1 to the RRM1. Interacts with THAP7 and THAP11 (via the HMB). Interacts directly with OGT; the interaction, which requires the HCFC1 cleavage site domain, glycosylates and promotes the proteolytic processing of HCFC1, retains OGT in the nucleus and impacts the expression of herpes simplex virus immediate early viral genes. Component of the SET1 complex, at least composed of the catalytic subunit (SETD1A or SETD1B), WDR5, WDR82, RBBP5, ASH2L, CXXC1, HCFC1 and DPY30. Component of the NSL complex at least composed of MOF/KAT8, KANSL1, KANSL2, KANSL3, MCRS1, PHF20, OGT1/OGT, WDR5 and HCFC1. Component of a complex at least composed of ZNF335, HCFC1, CCAR2, EMSY, MKI67, RBBP5, ASH2L and WDR5; the complex is formed as a result of interactions between components of a nuclear receptor-mediated transcription complex and a histone methylation complex. Within the complex interacts with ZNF335. Interacts with TET2 and TET3. Interacts with HCFC1R1. Interacts with THAP11. Interacts (via Kelch domain) with KMT2E/MLL5 isoform 3 (via HBM motif). Interacts with E2F1. Accessory scaffold component of the polycomb repressive deubiquitinase (PR-DUB) complex, at least composed of BAP1, one of ASXL1, ASXL2 or (probably) ASXL3 and one of MBD5 or MBD6; the PR-DUB core associates with a number of accessory proteins, including FOXK1, FOXK2, KDM1B, HCFC1, YY1 and OGT. Interacts with YY1 (via Gly-rich region); the interaction is direct. Interacts with BAP1 (via HBM-like motif). In terms of processing, proteolytically cleaved at one or several PPCE--THET sites within the HCF repeats. Further cleavage of the primary N- and C-terminal chains results in a 'trimming' and accumulation of the smaller chains. Cleavage is promoted by O-glycosylation. Post-translationally, O-glycosylated. GlcNAcylation by OGT promotes proteolytic processing. Ubiquitinated. Lys-1818 and Lys-1819 are ubiquitinated both via 'Lys-48'- and 'Lys-63'-linked polyubiquitin chains. BAP1 mediated deubiquitination of 'Lys-48'-linked polyubiquitin chains; deubiquitination by BAP1 does not seem to stabilize the protein.

It is found in the cytoplasm. The protein localises to the nucleus. Its function is as follows. Transcriptional coregulator. Serves as a scaffold protein, bridging interactions between transcription factors, including THAP11 and ZNF143, and transcriptional coregulators. Involved in control of the cell cycle. Also antagonizes transactivation by ZBTB17 and GABP2; represses ZBTB17 activation of the p15(INK4b) promoter and inhibits its ability to recruit p300. Coactivator for EGR2 and GABP2. Tethers the chromatin modifying Set1/Ash2 histone H3 'Lys-4' methyltransferase (H3K4me) and Sin3 histone deacetylase (HDAC) complexes (involved in the activation and repression of transcription, respectively) together. Component of a THAP1/THAP3-HCFC1-OGT complex that is required for the regulation of the transcriptional activity of RRM1. As part of the NSL complex it may be involved in acetylation of nucleosomal histone H4 on several lysine residues. Recruits KMT2E/MLL5 to E2F1 responsive promoters promoting transcriptional activation and thereby facilitates G1 to S phase transition. Modulates expression of homeobox protein PDX1, perhaps acting in concert with transcription factor E2F1, thereby regulating pancreatic beta-cell growth and glucose-stimulated insulin secretion. May negatively modulate transcriptional activity of FOXO3. The sequence is that of Host cell factor 1 from Rattus norvegicus (Rat).